A 491-amino-acid polypeptide reads, in one-letter code: MTDLTSLTLAEARDGLANKSFTALELTDAHLEAIERARVLNAYVLETPAQARAMAREADVRIAKGEGGPLNGLPLGVKDLFATEGTRTTACSQILDDFKPPYESTVTSQLWRDGAVMLGKLNNDEFAMGSSNETSRFGPVVNPWRRQGSDAKLVPGGSSGGSASAVAAGLCLGATATDTGGSIRQPAAFTGTVGIKPTYGRCSRWGIVAFASSLDQAGPIARTVRDAAILMHSMAGHDPKDTTSVDRPVPDYEAAVGKSVKGMKIGIPKEYRLDGMPAEIEKLWTQGAGWLKSAGAELVEVSLPHTKYALPAYYIVAPAEASSNLARYDGVRYGARVEGRNIVEMYENTRAKGFGAEVRRRIMIGTYVLSAGYYDAYYLRAQKVRTLIKKDFEDCYAAGIDAILTPATPSAAFGIGEKAGADPIEMYLNDIFTVTANMAGLPGIAVPAGRDAQGLPLGLQLVGRPFDEETLLSLGEVIEQAAGRFTPERWW.

Residues K78 and S158 each act as charge relay system in the active site. S182 serves as the catalytic Acyl-ester intermediate.

It belongs to the amidase family. GatA subfamily. As to quaternary structure, heterotrimer of A, B and C subunits.

It carries out the reaction L-glutamyl-tRNA(Gln) + L-glutamine + ATP + H2O = L-glutaminyl-tRNA(Gln) + L-glutamate + ADP + phosphate + H(+). In terms of biological role, allows the formation of correctly charged Gln-tRNA(Gln) through the transamidation of misacylated Glu-tRNA(Gln) in organisms which lack glutaminyl-tRNA synthetase. The reaction takes place in the presence of glutamine and ATP through an activated gamma-phospho-Glu-tRNA(Gln). The protein is Glutamyl-tRNA(Gln) amidotransferase subunit A of Nitrobacter hamburgensis (strain DSM 10229 / NCIMB 13809 / X14).